Reading from the N-terminus, the 422-residue chain is Serine hydroxymethyltransferase (422 aa).

(6S)-5,6,7,8-tetrahydrofolate contacts are provided by residues leucine 118 and 122–124 (GHL). Lysine 227 bears the N6-(pyridoxal phosphate)lysine mark. Glutamate 242 contributes to the (6S)-5,6,7,8-tetrahydrofolate binding site.

This sequence belongs to the SHMT family. Homodimer. It depends on pyridoxal 5'-phosphate as a cofactor.

It is found in the cytoplasm. It carries out the reaction (6R)-5,10-methylene-5,6,7,8-tetrahydrofolate + glycine + H2O = (6S)-5,6,7,8-tetrahydrofolate + L-serine. It functions in the pathway one-carbon metabolism; tetrahydrofolate interconversion. The protein operates within amino-acid biosynthesis; glycine biosynthesis; glycine from L-serine: step 1/1. Its function is as follows. Catalyzes the reversible interconversion of serine and glycine with tetrahydrofolate (THF) serving as the one-carbon carrier. This reaction serves as the major source of one-carbon groups required for the biosynthesis of purines, thymidylate, methionine, and other important biomolecules. Also exhibits THF-independent aldolase activity toward beta-hydroxyamino acids, producing glycine and aldehydes, via a retro-aldol mechanism. The protein is Serine hydroxymethyltransferase of Sulfurihydrogenibium sp. (strain YO3AOP1).